A 639-amino-acid chain; its full sequence is Polyvinylalcohol dehydrogenase (639 aa).

The first 33 residues, Met1–Ala33, serve as a signal peptide directing secretion. A Cytochrome c domain is found at Leu36–Ala152. 3 residues coordinate heme: Cys49, Cys52, and His53.

Belongs to the bacterial PQQ dehydrogenase family. Monomer. The cofactor is pyrroloquinoline quinone.

The protein localises to the cytoplasm. It carries out the reaction a polyvinyl alcohol + 2n Fe(III)-[cytochrome c] = an oxidized polyvinyl alcohol + 2n Fe(II)-[cytochrome c] + 2n H(+). Functionally, catalyzes the oxidation of polyvinyl alcohol (PVA) in the polyvinyl alcohol degradation pathway. The chain is Polyvinylalcohol dehydrogenase (pvaA) from Pseudomonas sp.